A 215-amino-acid chain; its full sequence is Outer-membrane lipoprotein LolB (215 aa).

Positions 1–21 (MLIPKKYYLLIILLSNCLLAS) are cleaved as a signal peptide. Cys-22 is lipidated: N-palmitoyl cysteine. The S-diacylglycerol cysteine moiety is linked to residue Cys-22.

It belongs to the LolB family. In terms of assembly, monomer.

The protein resides in the cell outer membrane. In terms of biological role, plays a critical role in the incorporation of lipoproteins in the outer membrane after they are released by the LolA protein. The protein is Outer-membrane lipoprotein LolB of Baumannia cicadellinicola subsp. Homalodisca coagulata.